The sequence spans 197 residues: MEAFRTHTGIGVPLRRSNVDTDQIIPAVYLKRVTRTGFEDGLFAAWRNDPSFVLNLPPFDRGSVLVAGPDFGTGSSREHAVWALMDYGFRVVISSRFADIFRGNAGKAGLLAAEVNQNDVELLWKLIEQNPGLEITVNLQDRNIIAGTVMVPFTIDDYTAWRLLEGLDDIGLTLRKQSEIEDYERRRPSWKPRTLPV.

The protein belongs to the LeuD family. LeuD type 1 subfamily. As to quaternary structure, heterodimer of LeuC and LeuD.

The catalysed reaction is (2R,3S)-3-isopropylmalate = (2S)-2-isopropylmalate. Its pathway is amino-acid biosynthesis; L-leucine biosynthesis; L-leucine from 3-methyl-2-oxobutanoate: step 2/4. In terms of biological role, catalyzes the isomerization between 2-isopropylmalate and 3-isopropylmalate, via the formation of 2-isopropylmaleate. This is 3-isopropylmalate dehydratase small subunit from Mycobacterium sp. (strain KMS).